The following is a 103-amino-acid chain: Large ribosomal subunit protein bL21 (103 aa).

The protein belongs to the bacterial ribosomal protein bL21 family. Part of the 50S ribosomal subunit. Contacts protein L20.

Its function is as follows. This protein binds to 23S rRNA in the presence of protein L20. This is Large ribosomal subunit protein bL21 from Sodalis glossinidius (strain morsitans).